A 446-amino-acid polypeptide reads, in one-letter code: Phosphoglucosamine mutase (446 aa).

S102 functions as the Phosphoserine intermediate in the catalytic mechanism. The Mg(2+) site is built by S102, D241, D243, and D245. S102 carries the post-translational modification Phosphoserine.

This sequence belongs to the phosphohexose mutase family. The cofactor is Mg(2+). Activated by phosphorylation.

The catalysed reaction is alpha-D-glucosamine 1-phosphate = D-glucosamine 6-phosphate. In terms of biological role, catalyzes the conversion of glucosamine-6-phosphate to glucosamine-1-phosphate. This Yersinia pseudotuberculosis serotype O:1b (strain IP 31758) protein is Phosphoglucosamine mutase.